The sequence spans 281 residues: NADPH-dependent 7-cyano-7-deazaguanine reductase (281 aa).

81–83 is a substrate binding site; it reads VES. 83–84 serves as a coordination point for NADPH; it reads SK. Residue Cys-188 is the Thioimide intermediate of the active site. Asp-195 serves as the catalytic Proton donor. 227 to 228 provides a ligand contact to substrate; the sequence is HE. 256 to 257 contacts NADPH; it reads RG.

It belongs to the GTP cyclohydrolase I family. QueF type 2 subfamily. In terms of assembly, homodimer.

Its subcellular location is the cytoplasm. The enzyme catalyses 7-aminomethyl-7-carbaguanine + 2 NADP(+) = 7-cyano-7-deazaguanine + 2 NADPH + 3 H(+). Its pathway is tRNA modification; tRNA-queuosine biosynthesis. Its function is as follows. Catalyzes the NADPH-dependent reduction of 7-cyano-7-deazaguanine (preQ0) to 7-aminomethyl-7-deazaguanine (preQ1). This chain is NADPH-dependent 7-cyano-7-deazaguanine reductase, found in Acidovorax ebreus (strain TPSY) (Diaphorobacter sp. (strain TPSY)).